We begin with the raw amino-acid sequence, 174 residues long: Adenylate kinase (174 aa).

An NMP region spans residues serine 12–valine 41. Residues threonine 13, arginine 18, glycine 39–valine 41, glycine 67–arginine 70, and glutamine 74 each bind AMP. The tract at residues glycine 104–aspartate 141 is LID. ATP contacts are provided by residues arginine 105 and threonine 114–tyrosine 115. 2 residues coordinate AMP: arginine 138 and arginine 149.

Belongs to the adenylate kinase family. In terms of assembly, monomer.

Its subcellular location is the cytoplasm. It catalyses the reaction AMP + ATP = 2 ADP. The protein operates within purine metabolism; AMP biosynthesis via salvage pathway; AMP from ADP: step 1/1. Its function is as follows. Catalyzes the reversible transfer of the terminal phosphate group between ATP and AMP. Plays an important role in cellular energy homeostasis and in adenine nucleotide metabolism. This chain is Adenylate kinase, found in Neisseria cinerea.